A 129-amino-acid polypeptide reads, in one-letter code: Mitochondrial pyruvate carrier 2 (129 aa).

Over 2–22 the chain is Mitochondrial matrix; that stretch reads STSSVRFAFRRFWQSETGPKT. Residues 23 to 39 traverse the membrane as a helical segment; it reads VHFWAPTLKWGLVFAGF. Over 40-54 the chain is Mitochondrial intermembrane; that stretch reads SDMKRPVEKISGAQN. The helical transmembrane segment at 55–71 threads the bilayer; that stretch reads LSLLSTALIWTRWSFVI. The Mitochondrial matrix portion of the chain corresponds to 72 to 74; that stretch reads KPR. Residues 75–91 form a helical membrane-spanning segment; the sequence is NILLASVNSFLCLTAGY. Over 92–129 the chain is Mitochondrial intermembrane; sequence QLGRIANYRIRNGDSISQLCSYILSGADESKKEITTGR.

It belongs to the mitochondrial pyruvate carrier (MPC) (TC 2.A.105) family. In terms of assembly, the functional 150 kDa pyruvate import complex is a heteromer of MPC1 and either MPC2 or MPC3.

The protein localises to the mitochondrion. The protein resides in the mitochondrion inner membrane. It carries out the reaction pyruvate(out) + H(+)(out) = pyruvate(in) + H(+)(in). Mediates the uptake of pyruvate into mitochondria. The polypeptide is Mitochondrial pyruvate carrier 2 (Saccharomyces cerevisiae (strain ATCC 204508 / S288c) (Baker's yeast)).